The chain runs to 969 residues: RNA polymerase-associated protein RapA (969 aa).

The 178-residue stretch at E162–D339 folds into the Helicase ATP-binding domain. D175–T182 serves as a coordination point for ATP. Residues D285–H288 carry the DEAH box motif. Residues R492–G663 form the Helicase C-terminal domain.

Belongs to the SNF2/RAD54 helicase family. RapA subfamily. In terms of assembly, interacts with the RNAP. Has a higher affinity for the core RNAP than for the holoenzyme. Its ATPase activity is stimulated by binding to RNAP.

Its function is as follows. Transcription regulator that activates transcription by stimulating RNA polymerase (RNAP) recycling in case of stress conditions such as supercoiled DNA or high salt concentrations. Probably acts by releasing the RNAP, when it is trapped or immobilized on tightly supercoiled DNA. Does not activate transcription on linear DNA. Probably not involved in DNA repair. This chain is RNA polymerase-associated protein RapA, found in Actinobacillus pleuropneumoniae serotype 5b (strain L20).